Consider the following 101-residue polypeptide: MIPGELFTDGPEHVLNPGRRAHTLAVVNASDRPIQVGSHYHFAETNGALGFDRAAAKGMRLNIASGSAVRLEPGQQRTVELVDYAGDRIVYGFRGLTQGAL.

This sequence belongs to the urease beta subunit family. In terms of assembly, heterotrimer of UreA (gamma), UreB (beta) and UreC (alpha) subunits. Three heterotrimers associate to form the active enzyme.

It is found in the cytoplasm. It catalyses the reaction urea + 2 H2O + H(+) = hydrogencarbonate + 2 NH4(+). Its pathway is nitrogen metabolism; urea degradation; CO(2) and NH(3) from urea (urease route): step 1/1. This is Urease subunit beta from Albidiferax ferrireducens (strain ATCC BAA-621 / DSM 15236 / T118) (Rhodoferax ferrireducens).